An 81-amino-acid polypeptide reads, in one-letter code: Omega-conotoxin-like Vc6.4 (81 aa).

Positions 1 to 22 (MKLTCVMIVAVLFLTANTFVTA) are cleaved as a signal peptide. Positions 23–51 (VPHSSNVLENLYLKARHEMENPEASKLNT) are excised as a propeptide. Disulfide bonds link Cys-55-Cys-72, Cys-62-Cys-76, and Cys-71-Cys-80.

This sequence belongs to the conotoxin O1 superfamily. In terms of tissue distribution, expressed by the venom duct.

The protein localises to the secreted. Omega-conotoxins act at presynaptic membranes, they bind and block voltage-gated calcium channels. Act on high voltage-activated (HVA) calcium currents in molluscan neurons. The chain is Omega-conotoxin-like Vc6.4 from Conus victoriae (Queen Victoria cone).